The primary structure comprises 469 residues: Ribulose bisphosphate carboxylase large chain (469 aa).

Residues 1–2 (MS) constitute a propeptide that is removed on maturation. P3 carries the N-acetylproline modification. Position 14 is an N6,N6,N6-trimethyllysine (K14). Positions 123 and 173 each coordinate substrate. K175 (proton acceptor) is an active-site residue. Substrate is bound at residue K177. The Mg(2+) site is built by K201, D203, and E204. The residue at position 201 (K201) is an N6-carboxylysine. The active-site Proton acceptor is the H294. Substrate is bound by residues R295, H327, and S379.

Belongs to the RuBisCO large chain family. Type I subfamily. In terms of assembly, heterohexadecamer of 8 large chains and 8 small chains; disulfide-linked. The disulfide link is formed within the large subunit homodimers. Mg(2+) is required as a cofactor. Post-translationally, the disulfide bond which can form in the large chain dimeric partners within the hexadecamer appears to be associated with oxidative stress and protein turnover.

It localises to the plastid. It is found in the chloroplast. It carries out the reaction 2 (2R)-3-phosphoglycerate + 2 H(+) = D-ribulose 1,5-bisphosphate + CO2 + H2O. The enzyme catalyses D-ribulose 1,5-bisphosphate + O2 = 2-phosphoglycolate + (2R)-3-phosphoglycerate + 2 H(+). Its function is as follows. RuBisCO catalyzes two reactions: the carboxylation of D-ribulose 1,5-bisphosphate, the primary event in carbon dioxide fixation, as well as the oxidative fragmentation of the pentose substrate in the photorespiration process. Both reactions occur simultaneously and in competition at the same active site. This chain is Ribulose bisphosphate carboxylase large chain, found in Dianthus caryophyllus (Carnation).